We begin with the raw amino-acid sequence, 574 residues long: Ankyrin repeat protein B18 (574 aa).

6 ANK repeats span residues 56–87, 135–164, 167–213, 217–249, 253–285, and 327–356; these read TGYT…NVTM, IKSR…DPNF, DGYT…NLNA, CGNT…NFKI, HGLT…NVGE, and EGKT…DINA. In terms of domain architecture, F-box spans 541 to 574; the sequence is NCLLTLLPSEIIYEILYMLTINDLYNISYPPTKV.

The sequence is that of Ankyrin repeat protein B18 from Homo sapiens (Human).